We begin with the raw amino-acid sequence, 211 residues long: GATA transcription factor 19 (211 aa).

The segment at 77-102 (CANCDTTSTPLWRNGPRGPKSLCNAC) adopts a GATA-type zinc-finger fold. The tract at residues 111–131 (RRASTARNSTSGGGSTAAGVP) is disordered.

It belongs to the type IV zinc-finger family. Class B subfamily. Forms heterodimers with GATA18.

Its subcellular location is the nucleus. In terms of biological role, transcriptional regulator that specifically binds 5'-GATA-3' or 5'-GAT-3' motifs within gene promoters. Regulates both flower and shoot apical meristem (SAM) development, especially for establishing organ boundaries in shoots and flowers, probably by controlling the number and position of WUS-expressing cells. The protein is GATA transcription factor 19 of Arabidopsis thaliana (Mouse-ear cress).